A 532-amino-acid chain; its full sequence is MESTTVLLAASTLLLVLHASYGQFPRACSTAQVLLSKECCPVWPGDNSSCGEVSGRGVCQDVVPSNSPVGAQFPFSGIDDRENWPIVFYNRTCQCQGNFMGYNCGECRFGYTGPNCTVRRNMIRKEIFRMTTAEKDKFIAYLNLAKRTISQDYVISTGTYEQMNNGSNPMFADINVYDLFVWLHYYASRDAFLEDGSVWANIDFAHEAPGFPPWHRFFLLLWEREIQKVAADDNFTIPFWDWRDAQQCDLCTDEFFGGTHPTSNNLLSPASFFSSWQVICSQPEEYNRLRIICNGTNEGPLLRSPGRHDRNRTPRLPTSADVEACLSLTDYETGAMDRFANFSFRNTLEGYAVPASGIANRSQSNMHNSLHVFMNGSMSNVQGSANDPIFVLHHAFVDSLFEQWLRRHQPSLDVYPEANAPVGHNREYNMVPFIPLFTNGEFFVQSRDLGYDYDYLAESGSIEDFLLPYLEQARQIWQWLLGAAVVGGLVTAVIATIISLTCRRKRRTKTSEETRPLLMEAEDYHATYQSNL.

Residues 1–22 (MESTTVLLAASTLLLVLHASYG) form the signal peptide. The Lumenal, melanosome portion of the chain corresponds to 23–479 (QFPRACSTAQ…LEQARQIWQW (457 aa)). 3 N-linked (GlcNAc...) asparagine glycosylation sites follow: N90, N115, and N165. Positions 184, 206, and 215 each coordinate Cu cation. N-linked (GlcNAc...) asparagine glycosylation is found at N234 and N341. Residues H367 and H371 each coordinate Cu cation. N375 carries N-linked (GlcNAc...) asparagine glycosylation. Cu cation is bound at residue H394. The chain crosses the membrane as a helical span at residues 480 to 500 (LLGAAVVGGLVTAVIATIISL). At 501–532 (TCRRKRRTKTSEETRPLLMEAEDYHATYQSNL) the chain is on the cytoplasmic side.

This sequence belongs to the tyrosinase family. As to quaternary structure, active tyrosinase has been found as a homodimer and homotetramer. The cofactor is Cu(2+). Frog skin.

It is found in the melanosome membrane. It catalyses the reaction 2 L-dopa + O2 = 2 L-dopaquinone + 2 H2O. The catalysed reaction is L-tyrosine + O2 = L-dopaquinone + H2O. With respect to regulation, activated by trypsin, chymotrypsin and subtilisin. Activated by alpha-chymotrypsin, thermolysin and Pronase. Inhibited by its product L-DOPA and tyrosine. Its function is as follows. This is a copper-containing oxidase that functions in the formation of pigments such as melanins and other polyphenolic compounds. Catalyzes the initial and rate limiting step in the cascade of reactions leading to melanin production from tyrosine. In addition to hydroxylating tyrosine to DOPA (3,4-dihydroxyphenylalanine), also catalyzes the oxidation of DOPA to DOPA-quinone. The polypeptide is Tyrosinase (Pelophylax lessonae (Pool frog)).